The following is a 413-amino-acid chain: Chloramphenicol resistance protein CraA (413 aa).

12 helical membrane passes run 18-38 (LMFPLALVLFEFAVYIGNDLI), 55-75 (WAPSSMSFYLLGGASVAWLLG), 84-104 (KKVLLSGVLFFALCCFLILLT), 110-130 (FLTLRFLQGIGLSVISAVGYA), 147-167 (LMANISLLAPLLGPVLGAFLI), 170-190 (VSWHWGFVAIALLALLSWVGL), 228-248 (ALPLVGMPLMLWIALSPIILV), 260-280 (LAQFPVFLGLIVGNIVLIKII), 289-309 (VLIGLPIMLTGTLILILGVVW), 312-332 (YLIPCLLIGMTLICFGEGISF), 349-369 (TVAAAVSMLLMTSFFAMIELV), and 373-393 (YTQFHLWAFVLSAFAFIALWF).

Belongs to the major facilitator superfamily.

The protein localises to the cell inner membrane. Its function is as follows. Efflux pump that mediates resistance to chloramphenicol. In Acinetobacter baumannii (strain ATCC 19606 / DSM 30007 / JCM 6841 / CCUG 19606 / CIP 70.34 / NBRC 109757 / NCIMB 12457 / NCTC 12156 / 81), this protein is Chloramphenicol resistance protein CraA.